We begin with the raw amino-acid sequence, 197 residues long: CRISPR system CMR subunit Cmr7 1 (197 aa).

Belongs to the CRISPR system Cmr7 family. As to quaternary structure, possible homodimer. Part of the CMR ribonucleoprotein complex, consisting of crRNA plus Cmr1/Cmr2/Cmr3/Cmr4/Cmr5/Cmr6 at 1:1 and possibly 3 Cmr7 dimers. A Cmr2/Cmr3/Cmr7 subcomplex without crRNA can also be isolated. It does not cleave target RNA.

The protein resides in the cytoplasm. Its function is as follows. CRISPR (clustered regularly interspaced short palindromic repeat) is an adaptive immune system that provides protection against mobile genetic elements (viruses, transposable elements and conjugative plasmids). CRISPR clusters contain spacers, sequences complementary to antecedent mobile elements, and target invading nucleic acids. CRISPR clusters are transcribed and processed into CRISPR RNA (crRNA). The CMR complex degrades RNA complementary to the crRNA (target RNA) within UA dinucleotides, generating 3'-OH and 5'-phosphate ends. Activity is dependent on the 8 nt long 5' tag in the crRNA, an unpaired 3' flag on the target RNA, and is stimulated by ATP. Some cleavage of the guide crRNA can also be observed. This is CRISPR system CMR subunit Cmr7 1 (cmr7A) from Saccharolobus solfataricus (strain ATCC 35092 / DSM 1617 / JCM 11322 / P2) (Sulfolobus solfataricus).